The chain runs to 519 residues: Cytochrome P450 CYP99A1 (519 aa).

Cysteine 453 lines the heme pocket.

This sequence belongs to the cytochrome P450 family. It depends on heme as a cofactor.

The protein resides in the membrane. This Sorghum bicolor (Sorghum) protein is Cytochrome P450 CYP99A1 (CYP99A1).